The primary structure comprises 159 residues: Ribosomal RNA large subunit methyltransferase H (159 aa).

S-adenosyl-L-methionine is bound by residues L76, G108, and 127 to 132 (FSKMTF).

It belongs to the RNA methyltransferase RlmH family. In terms of assembly, homodimer.

The protein localises to the cytoplasm. It catalyses the reaction pseudouridine(1915) in 23S rRNA + S-adenosyl-L-methionine = N(3)-methylpseudouridine(1915) in 23S rRNA + S-adenosyl-L-homocysteine + H(+). Functionally, specifically methylates the pseudouridine at position 1915 (m3Psi1915) in 23S rRNA. The sequence is that of Ribosomal RNA large subunit methyltransferase H from Staphylococcus haemolyticus (strain JCSC1435).